Here is a 488-residue protein sequence, read N- to C-terminus: IQ domain-containing protein IQM1 (488 aa).

The disordered stretch occupies residues 20–46 (RTNSFKRDDTNRHQNSPKSTMERSLSF). The segment covering 32–46 (HQNSPKSTMERSLSF) has biased composition (polar residues). Residues 106–135 (LDAAATTLQKVYKSYRTRRNLADCAVVVEE) form the IQ domain. Disordered stretches follow at residues 377–403 (SFKS…EKEE) and 448–472 (SPRV…VRVS). Residues 388 to 403 (RKEVSEEVEIPSEKEE) are compositionally biased toward basic and acidic residues.

Interacts (via IQ domain) with CAM5. In terms of tissue distribution, highly expressed in leaf mesophyll cells. Expressed in roots, rosette and cauline leaves, stems, flowers and siliques.

The protein localises to the cytoplasm. Its subcellular location is the nucleus. Involved in the modulation of stomatal movement. Promotes stomatal opening. May play a role in the regulation of chitin signaling. May be involved in biotic and abiotic stress responses. The chain is IQ domain-containing protein IQM1 from Arabidopsis thaliana (Mouse-ear cress).